The primary structure comprises 432 residues: Glutamyl-tRNA reductase (432 aa).

Residues Thr-49–Arg-52, Ser-109, Glu-114–Gln-116, and Gln-120 each bind substrate. Cys-50 functions as the Nucleophile in the catalytic mechanism. Gly-198–Ser-203 provides a ligand contact to NADP(+).

The protein belongs to the glutamyl-tRNA reductase family. In terms of assembly, homodimer.

The enzyme catalyses (S)-4-amino-5-oxopentanoate + tRNA(Glu) + NADP(+) = L-glutamyl-tRNA(Glu) + NADPH + H(+). It functions in the pathway porphyrin-containing compound metabolism; protoporphyrin-IX biosynthesis; 5-aminolevulinate from L-glutamyl-tRNA(Glu): step 1/2. Its pathway is porphyrin-containing compound metabolism; chlorophyll biosynthesis. In terms of biological role, catalyzes the NADPH-dependent reduction of glutamyl-tRNA(Glu) to glutamate 1-semialdehyde (GSA). The protein is Glutamyl-tRNA reductase of Parasynechococcus marenigrum (strain WH8102).